The following is a 285-amino-acid chain: Small ribosomal subunit protein uS2 (285 aa).

The segment at 228 to 285 (RAGLSADKDAKPEAGAGEPLAEWEQELLSQAAPAAEAEAAPAAEAEAAPAAEAPATEA) is disordered. The segment covering 258–285 (AAPAAEAEAAPAAEAEAAPAAEAPATEA) has biased composition (low complexity).

This sequence belongs to the universal ribosomal protein uS2 family.

The polypeptide is Small ribosomal subunit protein uS2 (Rhodococcus erythropolis (strain PR4 / NBRC 100887)).